Consider the following 1272-residue polypeptide: Regulator of nonsense transcripts 2 (1272 aa).

The segment covering Met-1–Glu-114 has biased composition (basic and acidic residues). 4 disordered regions span residues Met-1 to Glu-126, Asp-370 to Gly-389, Asn-423 to Thr-445, and Cys-490 to Asp-517. The stretch at Glu-54–Ala-134 forms a coiled coil. The sufficient for interaction with UPF1 stretch occupies residues Lys-94–Glu-133. Residues Leu-168 to Lys-431 enclose the MIF4G 1 domain. Basic and acidic residues-rich tracts occupy residues Pro-428 to Pro-439 and Cys-490 to Ser-513. Residues Glu-487–Ser-559 are a coiled coil. MIF4G domains are found at residues Asp-569–Pro-758 and Glu-773–Lys-986. A sufficient for interaction with UPF3A and UPF3B region spans residues Gly-711–Thr-928. A sufficient for interaction with EIF4A1 and EIF1 region spans residues Pro-757–Arg-1272. The tract at residues Glu-839–Val-859 is binds to UPF3B. Residues Asp-1018–Lys-1098 form a disordered region. Over residues Glu-1027–Thr-1076 the composition is skewed to acidic residues. The sufficient for interaction with UPF1 C-terminus stretch occupies residues Lys-1084–Arg-1272. Thr-1088 carries the post-translational modification Phosphothreonine. Interaction with UPF1 regions lie at residues Val-1105–Ser-1129 and Asp-1167–Glu-1207. Positions Val-1105–His-1198 are necessary for interaction with UPF1. The interval Asn-1220 to Arg-1272 is disordered.

Found in a post-splicing messenger ribonucleoprotein (mRNP) complex. Associates with the exon junction complex (EJC). Interacts with SMG1, EST1A, UPF1, UPF3A, UPF3B, EIF4A1 and EIF1. In terms of tissue distribution, ubiquitous.

The protein resides in the cytoplasm. It localises to the perinuclear region. Its function is as follows. Involved in nonsense-mediated decay (NMD) of mRNAs containing premature stop codons by associating with the nuclear exon junction complex (EJC). Recruited by UPF3B associated with the EJC core at the cytoplasmic side of the nuclear envelope and the subsequent formation of an UPF1-UPF2-UPF3 surveillance complex (including UPF1 bound to release factors at the stalled ribosome) is believed to activate NMD. In cooperation with UPF3B stimulates both ATPase and RNA helicase activities of UPF1. Binds spliced mRNA. The sequence is that of Regulator of nonsense transcripts 2 from Homo sapiens (Human).